Here is a 766-residue protein sequence, read N- to C-terminus: TRP-like ion channel protein flc1 (766 aa).

The signal sequence occupies residues 1–24 (MRIPLFILTFLFTFFSLATTPVSA). Over 25 to 170 (DSGVLYTDAV…ANGKTAHQKG (146 aa)) the chain is Lumenal. N56, N73, N89, and N109 each carry an N-linked (GlcNAc...) asparagine glycan. Residues 171–191 (VIWASAIFTLVAFLVAIWHTA) form a helical membrane-spanning segment. At 192–205 (SGTSTSPIQYRWFD) the chain is on the cytoplasmic side. Residues 206–226 (ILFIFQVAAASGLLHLNYPLV) traverse the membrane as a helical segment. At 227-351 (YTNFVQNFHW…RIPEANAYDT (125 aa)) the chain is on the lumenal side. The N-linked (GlcNAc...) asparagine glycan is linked to N325. The chain crosses the membrane as a helical span at residues 352–372 (IWFVFLALIGIFIAFHVLLFG). Residues 373-407 (MVLLFDRMGRNRSHLGWAARLRRMWWPFCVGNSLR) lie on the Cytoplasmic side of the membrane. The helical transmembrane segment at 408 to 428 (LCLIGFFPIWIFAFWQFHIGD) threads the bilayer. At 429 to 432 (SGLS) the chain is on the lumenal side. Residues 433 to 453 (IFWAVFGILLTLVPLATAFLL) traverse the membrane as a helical segment. Topologically, residues 454–493 (SLLRARRISSTSPEINSLYTSFRYFHSIGVLYRQYRQKFH) are cytoplasmic. A helical membrane pass occupies residues 494–514 (YFWFTPFVLAMIARAGFIAFG). Residues 515-517 (PAS) are Lumenal-facing. Residues 518-538 (AWAQVIGNLVVEFIVLVALLA) traverse the membrane as a helical segment. Over 539–548 (CRPHKDKKGD) the chain is Cytoplasmic. A helical membrane pass occupies residues 549-569 (WLGAFLSICRLIAIGLLIAFI). Residues 570-580 (PDMNVKPIPRA) lie on the Lumenal side of the membrane. The helical transmembrane segment at 581–601 (VIAFVIIVFYGVPVVFLFVGF) threads the bilayer. The Cytoplasmic segment spans residues 602–766 (LWNIGYGYLW…TDEKQWSRRY (165 aa)). The disordered stretch occupies residues 704-766 (ASSADGALSP…TDEKQWSRRY (63 aa)). Basic and acidic residues predominate over residues 757 to 766 (TDEKQWSRRY).

It belongs to the transient receptor potential (TRP) ion channel family.

Its subcellular location is the endoplasmic reticulum membrane. Endoplasmic reticulum membrane flavin carrier protein that plays a crucial role in Ca(2+) signaling/homeostasis via the modulation of the calcineurin-Crz1 stress response pathway which is important for both stress responses and virulence. This chain is TRP-like ion channel protein flc1, found in Cryptococcus neoformans var. grubii serotype A (strain H99 / ATCC 208821 / CBS 10515 / FGSC 9487) (Filobasidiella neoformans var. grubii).